Here is a 438-residue protein sequence, read N- to C-terminus: Protein translocase subunit SecY (438 aa).

The helical transmembrane segment at 1 to 43 (MKIKPILELIPEVKRPLKGVSFKEKIQWTGLVLILYFILGTID) threads the bilayer. Topologically, residues 44–54 (IYMGGAEMPAM) are extracellular. An intramembrane region (helical) is located at residues 55–62 (FAFWQTVT). A discontinuously helical membrane pass occupies residues 55 to 83 (FAFWQTVTASKMGTLITLGIGPIVTAGII). An intramembrane segment occupies 63–74 (ASKMGTLITLGI). The helical intramembrane region spans 75 to 83 (GPIVTAGII). At 84 to 104 (MQLLVGSELISLDLSKPMNRA) the chain is on the cytoplasmic side. The chain crosses the membrane as a helical span at residues 105–129 (LFQGLQKLFGIFLCFLEAVMFVGAG). Topologically, residues 130 to 136 (AFGVVNS) are extracellular. The chain crosses the membrane as a helical span at residues 137–161 (TLALILVLQLALGAILVIYLDEIVS). The Cytoplasmic portion of the chain corresponds to 162–167 (RYGIGS). The chain crosses the membrane as a helical span at residues 168–186 (GIGLFIAAGVAQTIFVGAF). Residues 187–209 (GAEGYLWKFFSAMSVGSLGIAFE) lie on the Extracellular side of the membrane. The helical transmembrane segment at 210–231 (YILPILSTLFVFLVVVYVESIR) threads the bilayer. Topologically, residues 232–256 (VEIPLAHGRVKGAVGKYPIKFIYVS) are cytoplasmic. Residues 257-278 (NLPVILAAALFANIQLWGMFLD) form a helical membrane-spanning segment. Residues 279 to 315 (RMGYPILGQYSNGTAVSGIAYYFSTPYGISNIISDPL) lie on the Extracellular side of the membrane. The chain crosses the membrane as a helical span at residues 316-335 (HAIFYTLMMVIFCILFGLFW). Residues 336–378 (VETSGLDAKSMAKKLGNLDMAIKGFRKSQKSIEQRLKRYIKPI) lie on the Cytoplasmic side of the membrane. Residues 379–397 (TVMGSAFVGFLAAAADFTG) form a helical membrane-spanning segment. Residues 398-400 (ALG) are Extracellular-facing. Residues 401-415 (GGTGVLLTVSIVYRL) traverse the membrane as a helical segment. Over 416–438 (YEQLVQEQLSELHPAVAKFVGKR) the chain is Cytoplasmic.

This sequence belongs to the SecY/SEC61-alpha family. As to quaternary structure, component of the Sec protein translocase complex. Heterotrimer consisting of alpha (SecY), beta (SecG) and gamma (SecE) subunits. The heterotrimers can form oligomers, although 1 heterotrimer is thought to be able to translocate proteins. Interacts with the ribosome. May interact with SecDF, and other proteins may be involved.

The protein localises to the cell membrane. The central subunit of the protein translocation channel SecYEG. Consists of two halves formed by TMs 1-5 and 6-10. These two domains form a lateral gate at the front which open onto the bilayer between TMs 2 and 7, and are clamped together by SecE at the back. The channel is closed by both a pore ring composed of hydrophobic SecY resides and a short helix (helix 2A) on the extracellular side of the membrane which forms a plug. The plug probably moves laterally to allow the channel to open. The ring and the pore may move independently. The protein is Protein translocase subunit SecY of Methanococcus vannielii.